The sequence spans 163 residues: Probable chemoreceptor glutamine deamidase CheD (163 aa).

It belongs to the CheD family.

The enzyme catalyses L-glutaminyl-[protein] + H2O = L-glutamyl-[protein] + NH4(+). Functionally, probably deamidates glutamine residues to glutamate on methyl-accepting chemotaxis receptors (MCPs), playing an important role in chemotaxis. The polypeptide is Probable chemoreceptor glutamine deamidase CheD (Borrelia turicatae (strain 91E135)).